Here is a 353-residue protein sequence, read N- to C-terminus: MGSASSKTRKDKAKSSTIAACPTDTAAAKACPTRLDDGLAQVAMFAGLRQVTMGVLRIDYDYQTNLGDILDPRSFDFRLVSATVEGLTFKRAQEGEPLPCYVMSNLDGAVKKLIDAGADFIVGDCGFLVYWQVYVRDFAQQYAGGRACPVMLSSLVLSLPLLATIPVGGKIGILTASKGSLMKMQKKLASVIELQKEEARTRAVPAAVQPSGIEINFSDPRFKVVGLDTVNSFKTALADDSGVDDRRSIAIEIAKYCKQVACEDPAICAWLIECTEAGGFSWAIKLGTGLPVWDPVTIGRFLSLGFTSSLPSVALTLGETGQVALDPNETDVSKGRPTKAEHRFGPEFEEMLQ.

Residues Cys125 and Cys274 each act as proton donor/acceptor in the active site. The disordered stretch occupies residues 326–353; it reads DPNETDVSKGRPTKAEHRFGPEFEEMLQ. Residues 331-346 show a composition bias toward basic and acidic residues; it reads DVSKGRPTKAEHRFGP.

The protein belongs to the aspartate/glutamate racemases family. ALMA1 subfamily. In terms of assembly, homotetramer.

The catalysed reaction is S,S-dimethyl-beta-propiothetin = acrylate + dimethyl sulfide + H(+). Its function is as follows. Mediates cleavage of dimethylsulfoniopropionate (DMSP) into dimethyl sulfide (DMS) and acrylate. DMS is the principal form by which sulfur is transported from oceans to the atmosphere and is a key component of the ocean sulfur cycle. This chain is Dimethylsulfoniopropionate lyase 2, found in Emiliania huxleyi (strain CCMP1516).